A 298-amino-acid polypeptide reads, in one-letter code: Urease accessory protein UreD (298 aa).

The protein belongs to the UreD family. In terms of assembly, ureD, UreF and UreG form a complex that acts as a GTP-hydrolysis-dependent molecular chaperone, activating the urease apoprotein by helping to assemble the nickel containing metallocenter of UreC. The UreE protein probably delivers the nickel.

Its subcellular location is the cytoplasm. Required for maturation of urease via the functional incorporation of the urease nickel metallocenter. The sequence is that of Urease accessory protein UreD from Marinobacter nauticus (strain ATCC 700491 / DSM 11845 / VT8) (Marinobacter aquaeolei).